The following is a 316-amino-acid chain: Protein C4 (316 aa).

This sequence belongs to the poxviridae OPG031 protein family.

The protein resides in the host cytoplasm. It is found in the host nucleus. Its function is as follows. Plays a role in the inhibition of host NF-kappa-B activation. Mechanistically, blocks the subunit p65/RELA translocation into the host nucleus. This chain is Protein C4 (OPG031), found in Homo sapiens (Human).